Reading from the N-terminus, the 230-residue chain is Secretory carrier-associated membrane protein 4 (230 aa).

Residues 1 to 39 lie on the Cytoplasmic side of the membrane; it reads MSGKENNFPPLPKFIPLKPCFYQNFSDEIPIEHQVLVKR. The next 4 helical transmembrane spans lie at 40–60, 61–81, 105–125, and 149–169; these read IYRLWLFYCATLGVNLVACLA, WWIAGGSGANFGLALLWLLLF, FMAFFFIFGAQFILTIIQAVG, and VVMLLPAIMFSMSAAMMAVMI. Residues 170–230 lie on the Cytoplasmic side of the membrane; it reads MKVHSIYRGT…SYPASGGQWP (61 aa). T194 bears the Phosphothreonine mark. The disordered stretch occupies residues 208–230; sequence FSGNSLPEYPTVPSYPASGGQWP.

This sequence belongs to the SCAMP family.

The protein resides in the membrane. Probably involved in membrane protein trafficking. This chain is Secretory carrier-associated membrane protein 4 (SCAMP4), found in Bos taurus (Bovine).